Reading from the N-terminus, the 287-residue chain is ATP synthase gamma chain (287 aa).

It belongs to the ATPase gamma chain family. F-type ATPases have 2 components, CF(1) - the catalytic core - and CF(0) - the membrane proton channel. CF(1) has five subunits: alpha(3), beta(3), gamma(1), delta(1), epsilon(1). CF(0) has three main subunits: a, b and c.

It is found in the cell inner membrane. In terms of biological role, produces ATP from ADP in the presence of a proton gradient across the membrane. The gamma chain is believed to be important in regulating ATPase activity and the flow of protons through the CF(0) complex. The protein is ATP synthase gamma chain of Xanthomonas axonopodis pv. citri (strain 306).